We begin with the raw amino-acid sequence, 492 residues long: Catalase-1/2 (492 aa).

Residues His-65 and Asn-138 contribute to the active site. Tyr-348 is a binding site for heme.

Belongs to the catalase family. Homotetramer. Heme serves as cofactor.

It localises to the cytoplasm. Its subcellular location is the cytosol. The protein localises to the peroxisome matrix. The enzyme catalyses 2 H2O2 = O2 + 2 H2O. In terms of biological role, catalyzes the degradation of hydrogen peroxide (H(2)O(2)) generated by peroxisomal oxidases to water and oxygen, thereby protecting cells from the toxic effects of hydrogen peroxide. This Glycine max (Soybean) protein is Catalase-1/2 (CAT1).